Here is an 87-residue protein sequence, read N- to C-terminus: UPF0335 protein RL4065 (87 aa).

Belongs to the UPF0335 family.

In Rhizobium johnstonii (strain DSM 114642 / LMG 32736 / 3841) (Rhizobium leguminosarum bv. viciae), this protein is UPF0335 protein RL4065.